The sequence spans 599 residues: Proline--tRNA ligase (599 aa).

It belongs to the class-II aminoacyl-tRNA synthetase family. ProS type 1 subfamily. In terms of assembly, homodimer.

It is found in the cytoplasm. The enzyme catalyses tRNA(Pro) + L-proline + ATP = L-prolyl-tRNA(Pro) + AMP + diphosphate. Functionally, catalyzes the attachment of proline to tRNA(Pro) in a two-step reaction: proline is first activated by ATP to form Pro-AMP and then transferred to the acceptor end of tRNA(Pro). As ProRS can inadvertently accommodate and process non-cognate amino acids such as alanine and cysteine, to avoid such errors it has two additional distinct editing activities against alanine. One activity is designated as 'pretransfer' editing and involves the tRNA(Pro)-independent hydrolysis of activated Ala-AMP. The other activity is designated 'posttransfer' editing and involves deacylation of mischarged Ala-tRNA(Pro). The misacylated Cys-tRNA(Pro) is not edited by ProRS. The sequence is that of Proline--tRNA ligase from Bifidobacterium animalis subsp. lactis (strain AD011).